The chain runs to 212 residues: Thiamine-phosphate synthase (212 aa).

Residues 39 to 41 (QLR) and Asn-71 each bind 4-amino-2-methyl-5-(diphosphooxymethyl)pyrimidine. 2 residues coordinate Mg(2+): Asp-72 and Asp-91. Ser-110 contacts 4-amino-2-methyl-5-(diphosphooxymethyl)pyrimidine. 136–138 (TGT) provides a ligand contact to 2-[(2R,5Z)-2-carboxy-4-methylthiazol-5(2H)-ylidene]ethyl phosphate. A 4-amino-2-methyl-5-(diphosphooxymethyl)pyrimidine-binding site is contributed by Lys-139. 2-[(2R,5Z)-2-carboxy-4-methylthiazol-5(2H)-ylidene]ethyl phosphate-binding positions include Gly-167 and 187-188 (VS).

The protein belongs to the thiamine-phosphate synthase family. Mg(2+) is required as a cofactor.

It catalyses the reaction 2-[(2R,5Z)-2-carboxy-4-methylthiazol-5(2H)-ylidene]ethyl phosphate + 4-amino-2-methyl-5-(diphosphooxymethyl)pyrimidine + 2 H(+) = thiamine phosphate + CO2 + diphosphate. The catalysed reaction is 2-(2-carboxy-4-methylthiazol-5-yl)ethyl phosphate + 4-amino-2-methyl-5-(diphosphooxymethyl)pyrimidine + 2 H(+) = thiamine phosphate + CO2 + diphosphate. It carries out the reaction 4-methyl-5-(2-phosphooxyethyl)-thiazole + 4-amino-2-methyl-5-(diphosphooxymethyl)pyrimidine + H(+) = thiamine phosphate + diphosphate. It functions in the pathway cofactor biosynthesis; thiamine diphosphate biosynthesis; thiamine phosphate from 4-amino-2-methyl-5-diphosphomethylpyrimidine and 4-methyl-5-(2-phosphoethyl)-thiazole: step 1/1. Condenses 4-methyl-5-(beta-hydroxyethyl)thiazole monophosphate (THZ-P) and 2-methyl-4-amino-5-hydroxymethyl pyrimidine pyrophosphate (HMP-PP) to form thiamine monophosphate (TMP). The chain is Thiamine-phosphate synthase from Azorhizobium caulinodans (strain ATCC 43989 / DSM 5975 / JCM 20966 / LMG 6465 / NBRC 14845 / NCIMB 13405 / ORS 571).